The primary structure comprises 301 residues: Protoheme IX farnesyltransferase (301 aa).

9 helical membrane passes run 29 to 49 (VVAL…PGAV), 51 to 71 (LQPL…AAAF), 101 to 121 (AFSF…WWVN), 123 to 143 (LTAW…TAYL), 150 to 170 (NIVI…TAVT), 177 to 197 (ALLL…ALAI), 223 to 243 (CILL…LVGM), 244 to 264 (SGPV…YKAW), and 281 to 301 (FSIY…YLWG).

Belongs to the UbiA prenyltransferase family. Protoheme IX farnesyltransferase subfamily.

It is found in the cell inner membrane. It catalyses the reaction heme b + (2E,6E)-farnesyl diphosphate + H2O = Fe(II)-heme o + diphosphate. The protein operates within porphyrin-containing compound metabolism; heme O biosynthesis; heme O from protoheme: step 1/1. In terms of biological role, converts heme B (protoheme IX) to heme O by substitution of the vinyl group on carbon 2 of heme B porphyrin ring with a hydroxyethyl farnesyl side group. This chain is Protoheme IX farnesyltransferase, found in Shewanella denitrificans (strain OS217 / ATCC BAA-1090 / DSM 15013).